The following is a 108-amino-acid chain: Large ribosomal subunit protein eL30 (108 aa).

It belongs to the eukaryotic ribosomal protein eL30 family.

This chain is Large ribosomal subunit protein eL30 (rpl30e), found in Saccharolobus solfataricus (strain ATCC 35092 / DSM 1617 / JCM 11322 / P2) (Sulfolobus solfataricus).